Reading from the N-terminus, the 576-residue chain is Proline--tRNA ligase (576 aa).

It belongs to the class-II aminoacyl-tRNA synthetase family. ProS type 1 subfamily. As to quaternary structure, homodimer.

The protein localises to the cytoplasm. It catalyses the reaction tRNA(Pro) + L-proline + ATP = L-prolyl-tRNA(Pro) + AMP + diphosphate. Functionally, catalyzes the attachment of proline to tRNA(Pro) in a two-step reaction: proline is first activated by ATP to form Pro-AMP and then transferred to the acceptor end of tRNA(Pro). As ProRS can inadvertently accommodate and process non-cognate amino acids such as alanine and cysteine, to avoid such errors it has two additional distinct editing activities against alanine. One activity is designated as 'pretransfer' editing and involves the tRNA(Pro)-independent hydrolysis of activated Ala-AMP. The other activity is designated 'posttransfer' editing and involves deacylation of mischarged Ala-tRNA(Pro). The misacylated Cys-tRNA(Pro) is not edited by ProRS. This is Proline--tRNA ligase from Bordetella parapertussis (strain 12822 / ATCC BAA-587 / NCTC 13253).